The primary structure comprises 328 residues: UPF0421 protein SAUSA300_1870 (328 aa).

The next 4 membrane-spanning stretches (helical) occupy residues 19–39 (IAIFLTAVFCMALDLTPIYAI), 61–81 (LPATVIGAGFAVLFTYLFGDQ), 108–128 (VAVLTSLAMIPGIHDAYIFNF), and 132–152 (TLTAIIGLVTSGLINFMVFPP).

This sequence belongs to the UPF0421 family.

It localises to the cell membrane. The protein is UPF0421 protein SAUSA300_1870 of Staphylococcus aureus (strain USA300).